The chain runs to 67 residues: MKNVFKALTVLLTLFSLTGCGLKGPLYFPPADKNAPPPTKPVETQTQSTVPDKNDRATGDGPSQVNY.

The signal sequence occupies residues 1-19 (MKNVFKALTVLLTLFSLTG). The N-palmitoyl cysteine moiety is linked to residue Cys-20. Cys-20 carries the S-diacylglycerol cysteine lipid modification. The tract at residues 26–67 (LYFPPADKNAPPPTKPVETQTQSTVPDKNDRATGDGPSQVNY) is disordered. Positions 42–51 (VETQTQSTVP) are enriched in polar residues.

The protein belongs to the LptM family. In terms of assembly, interacts with the outer membrane embedded portion of the LPS translocon formed by LptD and LptE (LptDE).

Its subcellular location is the cell outer membrane. Its function is as follows. Component of the lipopolysaccharide (LPS) transport (Lpt) pathway that promotes efficient assembly of the outer membrane LPS translocon (LptDE) by the BAM complex. Facilitates oxidative maturation of LptD by stabilizing a conformation of the LPS translocon in which LptD can efficiently acquire native disulfide bonds, thereby activating the LPS translocon. This is LPS-assembly lipoprotein LptM from Escherichia coli O157:H7.